A 358-amino-acid chain; its full sequence is 3-dehydroquinate synthase (358 aa).

Residues 104 to 108, 128 to 129, lysine 140, lysine 149, and 167 to 170 each bind NAD(+); these read GVIGD, TT, and FLNT. Zn(2+) is bound by residues glutamate 182, histidine 246, and histidine 260.

Belongs to the sugar phosphate cyclases superfamily. Dehydroquinate synthase family. It depends on Co(2+) as a cofactor. Requires Zn(2+) as cofactor. NAD(+) is required as a cofactor.

The protein resides in the cytoplasm. It catalyses the reaction 7-phospho-2-dehydro-3-deoxy-D-arabino-heptonate = 3-dehydroquinate + phosphate. The protein operates within metabolic intermediate biosynthesis; chorismate biosynthesis; chorismate from D-erythrose 4-phosphate and phosphoenolpyruvate: step 2/7. Functionally, catalyzes the conversion of 3-deoxy-D-arabino-heptulosonate 7-phosphate (DAHP) to dehydroquinate (DHQ). The polypeptide is 3-dehydroquinate synthase (Staphylococcus carnosus (strain TM300)).